The following is a 532-amino-acid chain: Bone morphogenetic protein receptor type-1A (532 aa).

The signal sequence occupies residues 1–23 (MTQLYTYIRLLGACLFIISHVQG). At 24 to 152 (QNLDSMLHGT…IGPFFDGSVR (129 aa)) the chain is on the extracellular side. Disulfide bonds link cysteine 61–cysteine 82, cysteine 63–cysteine 67, and cysteine 76–cysteine 100. Asparagine 73 carries an N-linked (GlcNAc...) asparagine glycan. Positions 107–109 (DFQ) are mediates specificity for BMP ligand. 2 disulfides stabilise this stretch: cysteine 110-cysteine 124 and cysteine 125-cysteine 130. Residues 153–176 (WLAVLISMAVCIVAMIVFSSCFCY) form a helical membrane-spanning segment. Residues 177-532 (KHYCKSISSR…KMVESQDVKI (356 aa)) lie on the Cytoplasmic side of the membrane. A GS domain is found at 204-233 (ESLKDLIDQSQSSGSGSGLPLLVQRTIAKQ). The region spanning 234 to 525 (IQMVRQVGKG…RIKKTLAKMV (292 aa)) is the Protein kinase domain. Residues 240–248 (VGKGRYGEV) and lysine 261 contribute to the ATP site. Residue aspartate 362 is the Proton acceptor of the active site.

The protein belongs to the protein kinase superfamily. TKL Ser/Thr protein kinase family. TGFB receptor subfamily. Interacts with low affinity with GDF5; positively regulates chondrocyte differentiation. Interacts with BMP4. Interacts with SCUBE3. Interacts with TSC22D1/TSC-22. Interacts with BMP2; the interaction may induce HAMP expression. Interacts with BMP6. Interacts with heterodimers composed of BMP2 and BMP6 in vitro; the interaction may induce HAMP expression. Requires Mg(2+) as cofactor. It depends on Mn(2+) as a cofactor. Post-translationally, glycosylated.

It localises to the cell membrane. The protein resides in the cell surface. It catalyses the reaction L-threonyl-[receptor-protein] + ATP = O-phospho-L-threonyl-[receptor-protein] + ADP + H(+). It carries out the reaction L-seryl-[receptor-protein] + ATP = O-phospho-L-seryl-[receptor-protein] + ADP + H(+). On ligand binding, forms a receptor complex consisting of two type II and two type I transmembrane serine/threonine kinases. Type II receptors phosphorylate and activate type I receptors which autophosphorylate, then bind and activate SMAD transcriptional regulators. Receptor for BMP2, BMP4, GDF5 and GDF6. Positively regulates chondrocyte differentiation through GDF5 interaction. Mediates induction of adipogenesis by GDF6. May promote the expression of HAMP, potentially via its interaction with BMP2. The protein is Bone morphogenetic protein receptor type-1A (Bmpr1a) of Rattus norvegicus (Rat).